We begin with the raw amino-acid sequence, 63 residues long: Large ribosomal subunit protein bL28 (63 aa).

The protein belongs to the bacterial ribosomal protein bL28 family.

In Heliobacterium modesticaldum (strain ATCC 51547 / Ice1), this protein is Large ribosomal subunit protein bL28.